The sequence spans 204 residues: Threonylcarbamoyl-AMP synthase (204 aa).

In terms of domain architecture, YrdC-like spans 10–204 (ADELDLVANY…KDLLAGHILR (195 aa)).

The protein belongs to the SUA5 family. TsaC subfamily.

Its subcellular location is the cytoplasm. The catalysed reaction is L-threonine + hydrogencarbonate + ATP = L-threonylcarbamoyladenylate + diphosphate + H2O. Required for the formation of a threonylcarbamoyl group on adenosine at position 37 (t(6)A37) in tRNAs that read codons beginning with adenine. Catalyzes the conversion of L-threonine, HCO(3)(-)/CO(2) and ATP to give threonylcarbamoyl-AMP (TC-AMP) as the acyladenylate intermediate, with the release of diphosphate. This Moraxella catarrhalis (strain BBH18) protein is Threonylcarbamoyl-AMP synthase.